The chain runs to 451 residues: uncharacterized protein (451 aa).

An FAD-binding PCMH-type domain is found at 29-204 (LERYPDIIVF…TSMTFKAVPI (176 aa)). H66 bears the Pros-8alpha-FAD histidine mark.

It belongs to the oxygen-dependent FAD-linked oxidoreductase family. Requires FAD as cofactor.

This is an uncharacterized protein from Bacillus subtilis (strain 168).